The primary structure comprises 348 residues: Dihydroorotase (348 aa).

Residues H17 and H19 each contribute to the Zn(2+) site. Substrate-binding positions include 19–21 and N45; that span reads HLR. Zn(2+) is bound by residues K103, H140, and H178. The residue at position 103 (K103) is an N6-carboxylysine. H140 serves as a coordination point for substrate. L223 contributes to the substrate binding site. Residue D251 participates in Zn(2+) binding. Residue D251 is part of the active site. The substrate site is built by H255 and A267.

It belongs to the metallo-dependent hydrolases superfamily. DHOase family. Class II DHOase subfamily. As to quaternary structure, homodimer. Zn(2+) serves as cofactor.

The catalysed reaction is (S)-dihydroorotate + H2O = N-carbamoyl-L-aspartate + H(+). It participates in pyrimidine metabolism; UMP biosynthesis via de novo pathway; (S)-dihydroorotate from bicarbonate: step 3/3. In terms of biological role, catalyzes the reversible cyclization of carbamoyl aspartate to dihydroorotate. This chain is Dihydroorotase, found in Salmonella dublin (strain CT_02021853).